The primary structure comprises 309 residues: GDP-6-deoxy-D-mannose reductase (309 aa).

NADP(+) is bound by residues phenylalanine 11–valine 12, arginine 32, aspartate 47–isoleucine 48, and alanine 71–serine 73. Residue serine 114–serine 115 coordinates substrate. NADP(+) is bound at residue tyrosine 140. Substrate-binding positions include asparagine 169, aspartate 183, arginine 209, and arginine 269–glutamate 272.

The protein belongs to the NAD(P)-dependent epimerase/dehydratase family. GDP-6-deoxy-D-mannose reductase subfamily.

The enzyme catalyses GDP-alpha-D-rhamnose + NAD(+) = GDP-4-dehydro-alpha-D-rhamnose + NADH + H(+). It carries out the reaction GDP-alpha-D-rhamnose + NADP(+) = GDP-4-dehydro-alpha-D-rhamnose + NADPH + H(+). Reductase that catalyzes the conversion of GDP-6-deoxy-D-mannose to GDP-4-dehydro-6-deoxy-D-mannose (GDP-D-rhamnose). This chain is GDP-6-deoxy-D-mannose reductase (rmd), found in Aneurinibacillus thermoaerophilus.